Here is a 191-residue protein sequence, read N- to C-terminus: dTTP/UTP pyrophosphatase (191 aa).

Asp-65 serves as the catalytic Proton acceptor.

This sequence belongs to the Maf family. YhdE subfamily. It depends on a divalent metal cation as a cofactor.

It localises to the cytoplasm. The catalysed reaction is dTTP + H2O = dTMP + diphosphate + H(+). It carries out the reaction UTP + H2O = UMP + diphosphate + H(+). Functionally, nucleoside triphosphate pyrophosphatase that hydrolyzes dTTP and UTP. May have a dual role in cell division arrest and in preventing the incorporation of modified nucleotides into cellular nucleic acids. The chain is dTTP/UTP pyrophosphatase from Leptospira biflexa serovar Patoc (strain Patoc 1 / Ames).